A 297-amino-acid chain; its full sequence is Bax inhibitor 1 (297 aa).

Residues 1-53 (MSGPPPPYEEQSSHLYGQPASSQDGNAFIPEDFKYSTVVISCEPIIRQRFMHK) lie on the Lumenal side of the membrane. A helical transmembrane segment spans residues 54-74 (VYSLLSCQLLASLSFCYWASV). Topologically, residues 75 to 85 (STSLQNFIMSH) are cytoplasmic. Residues 86 to 106 (IALFYICMVVSLVSCIWLAVS) traverse the membrane as a helical segment. Residues 107 to 146 (PRPEDYEASVPEPLLTGSSEEPAQEQRRLPWYVLSSYKQK) are Lumenal-facing. The chain crosses the membrane as a helical span at residues 147–167 (LTLLSIFTLSEAYCLSLVTLA). Over 168–171 (YDKD) the chain is Cytoplasmic. A helical membrane pass occupies residues 172–192 (TVLSALLITTIVVVGVSLTAL). Residues 193–208 (SERFENVLNSATSIYY) lie on the Lumenal side of the membrane. A helical transmembrane segment spans residues 209 to 229 (WLNWGLWIMIGMGLTALLFGW). Topologically, residues 230-239 (NTHSSKFNLL) are cytoplasmic. The chain crosses the membrane as a helical span at residues 240–260 (YGWLGAILFTAYLFIDTQLIF). Residues 261–270 (RKVYPDEEVR) are Lumenal-facing. Residues 271 to 291 (CAMMLYLDIVNLFLSILRILA) form a helical membrane-spanning segment. Over 292–297 (NSNDDN) the chain is Cytoplasmic.

The protein belongs to the BI1 family. LFG subfamily.

It is found in the endoplasmic reticulum membrane. The protein resides in the vacuole membrane. Its subcellular location is the mitochondrion membrane. Functionally, links the unfolded protein response and programmed cell death and mediates mitochondrial-dependent apoptosis. Induces cell death and disruption of the mitochondrial transmembrane potential via the mitochondrial phosphate carrier MIR1. Dispensible for starvation-induced autophagy. In Saccharomyces cerevisiae (strain ATCC 204508 / S288c) (Baker's yeast), this protein is Bax inhibitor 1 (BXI1).